The chain runs to 305 residues: Spore coat protein CotA (305 aa).

The protein localises to the spore coat. It localises to the spore. Its subcellular location is the perispore. Contributes to maintain proper thickness of the spore coat. May contribute to the formation of polar appendages. May play an important role in assembly of the outer layers of the spore coat. In Clostridioides difficile (strain 630) (Peptoclostridium difficile), this protein is Spore coat protein CotA.